The sequence spans 344 residues: N-acetyl-gamma-glutamyl-phosphate reductase 1 (344 aa).

The active site involves cysteine 150.

Belongs to the NAGSA dehydrogenase family. Type 1 subfamily.

Its subcellular location is the cytoplasm. It catalyses the reaction N-acetyl-L-glutamate 5-semialdehyde + phosphate + NADP(+) = N-acetyl-L-glutamyl 5-phosphate + NADPH + H(+). The protein operates within amino-acid biosynthesis; L-arginine biosynthesis; N(2)-acetyl-L-ornithine from L-glutamate: step 3/4. In terms of biological role, catalyzes the NADPH-dependent reduction of N-acetyl-5-glutamyl phosphate to yield N-acetyl-L-glutamate 5-semialdehyde. The sequence is that of N-acetyl-gamma-glutamyl-phosphate reductase 1 from Pseudomonas putida (strain ATCC 47054 / DSM 6125 / CFBP 8728 / NCIMB 11950 / KT2440).